The following is a 668-amino-acid chain: Acyl-CoA-binding domain-containing protein 4 (668 aa).

The ACB domain maps to 12–106 (YPERFYAAAS…LEEDDPGWYS (95 aa)). An acyl-CoA is bound by residues Lys-33, 48 to 52 (YALYQ), and Lys-74. Kelch repeat units lie at residues 195 to 242 (KMYI…TLLA), 255 to 305 (KLLS…MVGK), 307 to 356 (LVIF…VHAE), 358 to 407 (FLLI…TIGE), 408 to 456 (NWFI…LVVS), and 463 to 508 (VLVA…VNNA). Phosphoserine is present on residues Ser-515 and Ser-520. Residues 538 to 647 (KVEGNSERII…EQAAMNAKRQ (110 aa)) adopt a coiled-coil conformation. The interval 639–668 (QAAMNAKRQGSGGVWGWLAGSPQEKDDDSP) is disordered.

This sequence belongs to the ACBP family. As to quaternary structure, interacts with RAP2-3/EBP, an ethylene-responsive element binding protein. Mostly expressed in roots, stems, and leaves, and, to a lower extent, in flowers and siliques.

It is found in the cytoplasm. Binds medium- and long-chain acyl-CoA esters with very high affinity. Can interact in vitro with oleoyl-CoA, barely with palmitoyl-CoA, but not with arachidonyl-CoA. May function as an intracellular carrier of acyl-CoA esters. Plays a role in the biosynthesis of membrane lipids including galactolipids and phospholipids. This is Acyl-CoA-binding domain-containing protein 4 (ACBP4) from Arabidopsis thaliana (Mouse-ear cress).